The sequence spans 119 residues: Chymotrypsin inhibitor WCI (119 aa).

5 disulfides stabilise this stretch: Cys6–Cys55, Cys20–Cys44, Cys29–Cys87, Cys45–Cys105, and Cys57–Cys116.

The protein resides in the secreted. Functionally, inhibits bovine, insect and wheat chymotrypsins. Inhibits bovine chymotrypsin with Ki of 0.6 nM. Does not inhibit human or wheat alpha-amylases, bovine pancreatic trypsin, or trypsin-like activity isolated from wheat. The polypeptide is Chymotrypsin inhibitor WCI (Triticum aestivum (Wheat)).